The chain runs to 356 residues: MQAFFANPAVSWTLLTTGGILLVVIWVLLSLAFLLLADRKIWAGVQMRKGPNVVGPFGLLQSFADFFKFVLKEIVIPAGADKVVFILAPLISLILAFVGWAVVPFAPGWVVSNLNVGILYLLAMSSLGVYGIIMGGWASNSKYPFLGALRSAAQMVSYEVSIGLIIITVILLAGSMNLSTIVEKQSGWIWNWNVFGGGLNNLVLLPVMVVAMGMFYISALAETNRPPFDLPEAESELVAGYQVEYSSTPYLLFMVAEYSNIVLMCAMISVLFFGGWNPGFPTDFLSSWHPFAANLFLALVFYAKICFWFFMFAMAKAIVPRYRYDQLMRLGWKVFLPTSLVLVAAVAAWRVFGPAA.

The next 9 membrane-spanning stretches (helical) occupy residues 17 to 37, 51 to 71, 83 to 103, 116 to 136, 162 to 182, 202 to 222, 261 to 281, 295 to 315, and 334 to 354; these read TGGI…LLLA, PNVV…KFVL, VVFI…WAVV, VGIL…IMGG, IGLI…STIV, LVLL…ALAE, IVLM…PGFP, LFLA…FAMA, and VFLP…VFGP.

The protein belongs to the complex I subunit 1 family. In terms of assembly, NDH-1 is composed of 14 different subunits. Subunits NuoA, H, J, K, L, M, N constitute the membrane sector of the complex.

It localises to the cell inner membrane. It catalyses the reaction a quinone + NADH + 5 H(+)(in) = a quinol + NAD(+) + 4 H(+)(out). Functionally, NDH-1 shuttles electrons from NADH, via FMN and iron-sulfur (Fe-S) centers, to quinones in the respiratory chain. The immediate electron acceptor for the enzyme in this species is believed to be ubiquinone. Couples the redox reaction to proton translocation (for every two electrons transferred, four hydrogen ions are translocated across the cytoplasmic membrane), and thus conserves the redox energy in a proton gradient. This subunit may bind ubiquinone. The chain is NADH-quinone oxidoreductase subunit H from Caulobacter vibrioides (strain ATCC 19089 / CIP 103742 / CB 15) (Caulobacter crescentus).